Consider the following 211-residue polypeptide: ATP phosphoribosyltransferase (211 aa).

This sequence belongs to the ATP phosphoribosyltransferase family. Short subfamily. In terms of assembly, heteromultimer composed of HisG and HisZ subunits.

Its subcellular location is the cytoplasm. It carries out the reaction 1-(5-phospho-beta-D-ribosyl)-ATP + diphosphate = 5-phospho-alpha-D-ribose 1-diphosphate + ATP. Its pathway is amino-acid biosynthesis; L-histidine biosynthesis; L-histidine from 5-phospho-alpha-D-ribose 1-diphosphate: step 1/9. In terms of biological role, catalyzes the condensation of ATP and 5-phosphoribose 1-diphosphate to form N'-(5'-phosphoribosyl)-ATP (PR-ATP). Has a crucial role in the pathway because the rate of histidine biosynthesis seems to be controlled primarily by regulation of HisG enzymatic activity. The sequence is that of ATP phosphoribosyltransferase from Hahella chejuensis (strain KCTC 2396).